A 294-amino-acid polypeptide reads, in one-letter code: Lipoyl synthase (294 aa).

Positions 35, 40, 46, 61, 65, 68, and 275 each coordinate [4Fe-4S] cluster. Residues 46-264 form the Radical SAM core domain; it reads CWGGGTATVM…RDQGLALGFR (219 aa).

Belongs to the radical SAM superfamily. Lipoyl synthase family. Requires [4Fe-4S] cluster as cofactor.

It localises to the cytoplasm. The enzyme catalyses [[Fe-S] cluster scaffold protein carrying a second [4Fe-4S](2+) cluster] + N(6)-octanoyl-L-lysyl-[protein] + 2 oxidized [2Fe-2S]-[ferredoxin] + 2 S-adenosyl-L-methionine + 4 H(+) = [[Fe-S] cluster scaffold protein] + N(6)-[(R)-dihydrolipoyl]-L-lysyl-[protein] + 4 Fe(3+) + 2 hydrogen sulfide + 2 5'-deoxyadenosine + 2 L-methionine + 2 reduced [2Fe-2S]-[ferredoxin]. It participates in protein modification; protein lipoylation via endogenous pathway; protein N(6)-(lipoyl)lysine from octanoyl-[acyl-carrier-protein]: step 2/2. Functionally, catalyzes the radical-mediated insertion of two sulfur atoms into the C-6 and C-8 positions of the octanoyl moiety bound to the lipoyl domains of lipoate-dependent enzymes, thereby converting the octanoylated domains into lipoylated derivatives. This Anaeromyxobacter dehalogenans (strain 2CP-C) protein is Lipoyl synthase.